The primary structure comprises 753 residues: Enhancer of polycomb-like protein 1 (753 aa).

Disordered stretches follow at residues 1–75 (MAAA…RDLH) and 429–490 (VRTE…LPPA). The segment covering 46-71 (LDSNELEPSQVHHLNSNASSSSTQQP) has biased composition (polar residues). The segment covering 429 to 449 (VRTEDEEREKKREKKKQDQEL) has biased composition (basic and acidic residues). The span at 450-463 (ALKQQQALQQQQQQ) shows a compositional bias: low complexity.

The protein belongs to the enhancer of polycomb family. As to quaternary structure, component of the NuA4 histone acetyltransferase complex.

The protein localises to the nucleus. Functionally, component of the NuA4 histone acetyltransferase complex which is involved in transcriptional activation of selected genes principally by acetylation of nucleosomal histone H4 and H2A. The NuA4 complex is also involved in DNA repair. Involved in gene silencing by neighboring heterochromatin, blockage of the silencing spreading along the chromosome, and required for cell cycle progression through G2/M. The chain is Enhancer of polycomb-like protein 1 (EPL1) from Candida albicans (strain SC5314 / ATCC MYA-2876) (Yeast).